We begin with the raw amino-acid sequence, 690 residues long: MAEDLILERCDLQLEVNGRDHRTADLCRERLVLRRGQPFWLTLHFEGRGYEAGVDTLTFNAVTGPDPSEEAGTMARFSLSSAVEGGTWSASAVDQQDSTVSLLLSTPADAPIGLYRLSLEASTGYQGSSFVLGHFILLYNPRCPADAVYMDSDQERQEYVLTQQGFIYQGSAKFINGIPWNFGQFEDGILDICLMLLDTNPKFLKNAGQDCSRRSRPVYVGRVVSAMVNCNDDQGVLQGRWDNNYSDGVSPMSWIGSVDILRRWKDYGCQRVKYGQCWVFAAVACTVLRCLGIPTRVVTNFNSAHDQNSNLLIEYFRNESGEIEGNKSEMIWNFHCWVESWMTRPDLEPGYEGWQALDPTPQEKSEGTYCCGPVPVRAIKEGHLNVKYDAPFVFAEVNADVVNWIRQKDGSLRKSINHLVVGLKISTKSVGRDEREDITHTYKYPEGSEEEREAFVRANHLNKLATKEEAQEETGVAMRIRVGQNMTMGSDFDIFAYITNGTAESHECQLLLCARIVSYNGVLGPVCSTNDLLNLTLDPFSENSIPLHILYEKYGDYLTESNLIKVRGLLIEPAANSYVLAERDIYLENPEIKIRVLGEPKQNRKLIAEVSLKNPLPVPLLGCIFTVEGAGLTKDQKSVEVPDPVEAGEQAKVRVDLLPTEVGLHKLVVNFECDKLKAVKGYRNVIIGPA.

Position 2 is an N-acetylalanine (Ala2). 2 disulfide bridges follow: Cys230/Cys370 and Cys370/Cys371. Active-site residues include Cys277, His335, and Asp358. 5 residues coordinate Ca(2+): Asn398, Asp400, Glu436, Glu446, and Glu451. Residue Lys467 is modified to N6-acetyllysine. GTP is bound at residue 479–486 (RIRVGQNM). Residue Glu542 participates in Ca(2+) binding. 583-586 (RDIY) serves as a coordination point for GTP. An Isoglutamyl lysine isopeptide (Gln-Lys) (interchain with K-?) cross-link involves residue Gln636.

It belongs to the transglutaminase superfamily. Transglutaminase family. In terms of assembly, monomer. Interacts with phospholipase C; promoting alpha-1 adrenergic receptor signaling. Interacts with PLCD1. The cofactor is Ca(2+). Post-translationally, disulfide bond formation inactivates the calcium-dependent acyltransferase activity. Cys-370 can form disulfide bonds with both Cys-230 and Cys-371: formation of a disulfide bond between Cys-230 and Cys-370 facilitates formation of the disulfide between Cys-370 and Cys-371, which promotes inactivation of the acyltransferase activity. May also form interchain disulfids between Cys-230 and Cys-370. Ca(2+) protects against disulfide bond formation and inactivation. Auto-transglutaminated: Forms covalent cross-links mediated by transglutaminase between Gln-636 and the epsilon-amino group of a lysine residue of itself or HMGB1, forming homopolymers and heteropolymers, respectively. In terms of processing, S-nitrosylated, leading to inactivation of the acyltransferase activity.

The protein resides in the cytoplasm. It is found in the cytosol. It localises to the nucleus. The protein localises to the chromosome. Its subcellular location is the secreted. The protein resides in the extracellular space. It is found in the extracellular matrix. It localises to the cell membrane. The protein localises to the mitochondrion. It catalyses the reaction L-glutaminyl-[protein] + L-lysyl-[protein] = [protein]-L-lysyl-N(6)-5-L-glutamyl-[protein] + NH4(+). It carries out the reaction L-glutaminyl-[protein] + serotonin = 5-serotonyl-L-glutamyl-[protein] + NH4(+). The catalysed reaction is L-glutaminyl-[protein] + dopamine = 5-dopaminyl-L-glutamyl-[protein] + NH4(+). The enzyme catalyses L-glutaminyl-[protein] + histamine = 5-histaminyl-L-glutamyl-[protein] + NH4(+). It catalyses the reaction L-glutaminyl-[protein] + (R)-noradrenaline = 5-(R)-noradrenalinyl-L-glutamyl-[protein] + NH4(+). It carries out the reaction L-glutaminyl-[protein] + H2O = L-glutamyl-[protein] + NH4(+). With respect to regulation, acyltransferase activity is regulated by the binding of GTP and Ca(2+): inactivated by GTP, which stabilizes its closed structure, thereby obstructing the accessibility of substrates to the active sites. In contrast, Ca(2+) acts as a cofactor by inducing conformational change to the active open form. In absence of Ca(2+), Mg(2+) may bind Ca(2+)-binding sites, promoting GTP-binding and subsequent inhibition of the acyltransferase activity. Extracellularly reduced and activated by CLIC3. Functionally, calcium-dependent acyltransferase that catalyzes the formation of covalent bonds between peptide-bound glutamine and various primary amines, such as gamma-amino group of peptide-bound lysine, or mono- and polyamines, thereby producing cross-linked or aminated proteins, respectively. Involved in many biological processes, such as bone development, angiogenesis, wound healing, cellular differentiation, chromatin modification and apoptosis. Acts as a protein-glutamine gamma-glutamyltransferase by mediating the cross-linking of proteins, such as ACO2, HSPB6, FN1, HMGB1, RAP1GDS1, SLC25A4/ANT1, SPP1 and WDR54. Under physiological conditions, the protein cross-linking activity is inhibited by GTP; inhibition is relieved by Ca(2+) in response to various stresses. When secreted, catalyzes cross-linking of proteins of the extracellular matrix, such as FN1 and SPP1 resulting in the formation of scaffolds. Plays a key role during apoptosis, both by (1) promoting the cross-linking of cytoskeletal proteins resulting in condensation of the cytoplasm, and by (2) mediating cross-linking proteins of the extracellular matrix, resulting in the irreversible formation of scaffolds that stabilize the integrity of the dying cells before their clearance by phagocytosis, thereby preventing the leakage of harmful intracellular components. In addition to protein cross-linking, can use different monoamine substrates to catalyze a vast array of protein post-translational modifications: mediates aminylation of serotonin, dopamine, noradrenaline or histamine into glutamine residues of target proteins to generate protein serotonylation, dopaminylation, noradrenalinylation or histaminylation, respectively. Mediates protein serotonylation of small GTPases during activation and aggregation of platelets, leading to constitutive activation of these GTPases. Plays a key role in chromatin organization by mediating serotonylation and dopaminylation of histone H3. Catalyzes serotonylation of 'Gln-5' of histone H3 (H3Q5ser) during serotonergic neuron differentiation, thereby facilitating transcription. Acts as a mediator of neurotransmission-independent role of nuclear dopamine in ventral tegmental area (VTA) neurons: catalyzes dopaminylation of 'Gln-5' of histone H3 (H3Q5dop), thereby regulating relapse-related transcriptional plasticity in the reward system. Regulates vein remodeling by mediating serotonylation and subsequent inactivation of ATP2A2/SERCA2. Also acts as a protein deamidase by mediating the side chain deamidation of specific glutamine residues of proteins to glutamate. Catalyzes specific deamidation of protein gliadin, a component of wheat gluten in the diet. May also act as an isopeptidase cleaving the previously formed cross-links. Also able to participate in signaling pathways independently of its acyltransferase activity: acts as a signal transducer in alpha-1 adrenergic receptor-mediated stimulation of phospholipase C-delta (PLCD) activity and is required for coupling alpha-1 adrenergic agonists to the stimulation of phosphoinositide lipid metabolism. The sequence is that of Protein-glutamine gamma-glutamyltransferase 2 from Cavia cutleri (Guinea pig).